The following is a 496-amino-acid chain: Glycylpeptide N-tetradecanoyltransferase 1 (496 aa).

The interval 1–82 (MADESETAVK…SAQDQPVKMN (82 aa)) is disordered. 2 positions are modified to phosphoserine: Ser31 and Ser47. Positions 55 to 66 (KKKKKKQKKKKE) are enriched in basic residues. Ser83 bears the Phosphoserine mark. Tetradecanoyl-CoA is bound by residues Gln118, Phe119, Trp120, Phe247, Leu248, Cys249, Val250, Ser256, Arg258, Val259, and Ala260.

Belongs to the NMT family. Heart, gut, kidney, liver and placenta.

It is found in the cytoplasm. Its subcellular location is the cytosol. The protein resides in the membrane. It catalyses the reaction N-terminal glycyl-[protein] + tetradecanoyl-CoA = N-tetradecanoylglycyl-[protein] + CoA + H(+). The enzyme catalyses N-terminal glycyl-L-lysyl-[protein] + tetradecanoyl-CoA = N-terminal glycyl-(N(6)-tetradecanoyl)-L-lysyl-[protein] + CoA + H(+). Adds a myristoyl group to the N-terminal glycine residue of certain cellular and viral proteins. Also able to mediate N-terminal lysine myristoylation of proteins: catalyzes myristoylation of ARF6 on both 'Gly-2' and 'Lys-3'. Lysine myristoylation is required to maintain ARF6 on membranes during the GTPase cycle. This chain is Glycylpeptide N-tetradecanoyltransferase 1, found in Homo sapiens (Human).